The sequence spans 394 residues: Cysteine desulfurase IscS (394 aa).

Pyridoxal 5'-phosphate contacts are provided by residues 72–73 (GT), N152, Q180, and 200–202 (SAH). Residue K203 is modified to N6-(pyridoxal phosphate)lysine. T238 is a binding site for pyridoxal 5'-phosphate. The active-site Cysteine persulfide intermediate is the C326. C326 serves as a coordination point for [2Fe-2S] cluster.

The protein belongs to the class-V pyridoxal-phosphate-dependent aminotransferase family. NifS/IscS subfamily. Homodimer. Forms a heterotetramer with IscU, interacts with other sulfur acceptors. Pyridoxal 5'-phosphate is required as a cofactor.

The protein resides in the cytoplasm. It carries out the reaction (sulfur carrier)-H + L-cysteine = (sulfur carrier)-SH + L-alanine. Its pathway is cofactor biosynthesis; iron-sulfur cluster biosynthesis. In terms of biological role, master enzyme that delivers sulfur to a number of partners involved in Fe-S cluster assembly, tRNA modification or cofactor biosynthesis. Catalyzes the removal of elemental sulfur atoms from cysteine to produce alanine. Functions as a sulfur delivery protein for Fe-S cluster synthesis onto IscU, an Fe-S scaffold assembly protein, as well as other S acceptor proteins. This is Cysteine desulfurase IscS from Dictyoglomus turgidum (strain DSM 6724 / Z-1310).